The sequence spans 106 residues: MNAIIFCLLFTTVTATYEVFGKGIEHRNEHLIINQLDIIPVESTPTPNRASRVQKRLCGRRLILFMLATCGECDTDSSEDLSHICCIKQCDVQDIIRVCCPNSFRK.

Positions 1–15 (MNAIIFCLLFTTVTA) are cleaved as a signal peptide. The propeptide occupies 16–56 (TYEVFGKGIEHRNEHLIINQLDIIPVESTPTPNRASRVQKR). Intrachain disulfides connect C58/C86, C70/C99, C73/C100, and C85/C90.

Belongs to the insulin family.

The protein localises to the secreted. This chain is Probable insulin-like peptide beta-type 2 (ins-2), found in Caenorhabditis elegans.